The primary structure comprises 156 residues: MKLQLVAVGTKMPDWVQTGFLDYIKRFPKDMPFELTEVPAGKRGKNADIRRILEREGELMLAAVGKGNRIVTLDIPGKPWDTPALAGQLERWKQDGRDVSLLIGGPEGLAPTCKGAAEQSWSLSPLTLPHPLVRVLVAESLYRAWSITANHPYHRE.

Residues L73, G104, and 123–128 each bind S-adenosyl-L-methionine; that span reads LSPLTL.

The protein belongs to the RNA methyltransferase RlmH family. In terms of assembly, homodimer.

Its subcellular location is the cytoplasm. It catalyses the reaction pseudouridine(1915) in 23S rRNA + S-adenosyl-L-methionine = N(3)-methylpseudouridine(1915) in 23S rRNA + S-adenosyl-L-homocysteine + H(+). In terms of biological role, specifically methylates the pseudouridine at position 1915 (m3Psi1915) in 23S rRNA. The protein is Ribosomal RNA large subunit methyltransferase H of Edwardsiella ictaluri (strain 93-146).